Here is a 78-residue protein sequence, read N- to C-terminus: UPF0270 protein IL0325 (78 aa).

This sequence belongs to the UPF0270 family.

This Idiomarina loihiensis (strain ATCC BAA-735 / DSM 15497 / L2-TR) protein is UPF0270 protein IL0325.